We begin with the raw amino-acid sequence, 416 residues long: UDP-N-acetylglucosamine 1-carboxyvinyltransferase (416 aa).

22–23 serves as a coordination point for phosphoenolpyruvate; the sequence is KN. UDP-N-acetyl-alpha-D-glucosamine is bound at residue R92. The Proton donor role is filled by C116. C116 is subject to 2-(S-cysteinyl)pyruvic acid O-phosphothioketal. UDP-N-acetyl-alpha-D-glucosamine-binding positions include 121 to 125, D304, and I326; that span reads RPVDQ.

This sequence belongs to the EPSP synthase family. MurA subfamily.

The protein resides in the cytoplasm. The enzyme catalyses phosphoenolpyruvate + UDP-N-acetyl-alpha-D-glucosamine = UDP-N-acetyl-3-O-(1-carboxyvinyl)-alpha-D-glucosamine + phosphate. It participates in cell wall biogenesis; peptidoglycan biosynthesis. Functionally, cell wall formation. Adds enolpyruvyl to UDP-N-acetylglucosamine. In Janthinobacterium sp. (strain Marseille) (Minibacterium massiliensis), this protein is UDP-N-acetylglucosamine 1-carboxyvinyltransferase.